The chain runs to 557 residues: Protein NRT1/ PTR FAMILY 2.6 (557 aa).

A run of 12 helical transmembrane segments spans residues 26 to 46 (ITFP…LGWL), 67 to 87 (ILNI…IAAD), 89 to 109 (FFGT…GVVL), 136 to 156 (NIQL…AGGL), 177 to 197 (FFNW…TAIV), 203 to 223 (ISWS…LIVF), 318 to 338 (IIPL…QLGL), 356 to 376 (IPAG…IIVN), 398 to 418 (VGIG…VEAK), 439 to 459 (VLWL…HFPG), 478 to 498 (SITS…IDLI), and 518 to 538 (YWIL…CSWF).

This sequence belongs to the major facilitator superfamily. Proton-dependent oligopeptide transporter (POT/PTR) (TC 2.A.17) family. In terms of tissue distribution, expressed in roots.

The protein localises to the membrane. Functionally, transporter involved in a passive nitrate efflux. This chain is Protein NRT1/ PTR FAMILY 2.6 (NPF2.6), found in Arabidopsis thaliana (Mouse-ear cress).